The sequence spans 176 residues: HTH-type transcriptional regulator DctR (176 aa).

Residues 109–174 form the HTH luxR-type domain; it reads VPEANVSLSR…ELVRHQHIDY (66 aa). The H-T-H motif DNA-binding region spans 133 to 152; that stretch reads TEDILEKLKISLKTFYCHKH.

Its function is as follows. May act as a transcriptional regulator of dctA. Could be involved in the regulation of the genes coding for the type III secretion system in enterohaemorragic strains. This chain is HTH-type transcriptional regulator DctR (dctR), found in Escherichia coli O157:H7.